We begin with the raw amino-acid sequence, 285 residues long: Sulfotransferase 2A1 (285 aa).

Lysine 44, serine 45, glycine 46, threonine 47, asparagine 48, and tryptophan 49 together coordinate 3'-phosphoadenylyl sulfate. The active-site Proton acceptor is histidine 99. 8 residues coordinate 3'-phosphoadenylyl sulfate: arginine 121, serine 129, tyrosine 184, serine 218, methionine 223, arginine 247, lysine 248, and glycine 249. Phosphoserine is present on serine 251.

It belongs to the sulfotransferase 1 family. Homodimer. The N-terminus is blocked. In terms of tissue distribution, liver, adrenal and at lower level in the kidney. Is present in human fetus in higher level in the adrenal than the liver and the kidney.

The protein resides in the cytoplasm. The enzyme catalyses an alcohol + 3'-phosphoadenylyl sulfate = an alkyl sulfate + adenosine 3',5'-bisphosphate + H(+). It catalyses the reaction (24S)-hydroxycholesterol + 3'-phosphoadenylyl sulfate = (24S)-hydroxycholesterol 24-sulfate + adenosine 3',5'-bisphosphate + H(+). The catalysed reaction is (24S)-hydroxycholesterol + 3'-phosphoadenylyl sulfate = (24S)-hydroxycholesterol 3-sulfate + adenosine 3',5'-bisphosphate + H(+). It carries out the reaction (24S)-hydroxycholesterol 24-sulfate + 3'-phosphoadenylyl sulfate = (24S)-hydroxycholesterol 3,24-disulfate + adenosine 3',5'-bisphosphate + H(+). The enzyme catalyses 3beta-hydroxyandrost-5-en-17-one + 3'-phosphoadenylyl sulfate = dehydroepiandrosterone 3-sulfate + adenosine 3',5'-bisphosphate + H(+). It catalyses the reaction pregnenolone + 3'-phosphoadenylyl sulfate = pregnenolone sulfate + adenosine 3',5'-bisphosphate + H(+). The catalysed reaction is androsterone + 3'-phosphoadenylyl sulfate = androsterone 3alpha-sulfate + adenosine 3',5'-bisphosphate + H(+). It carries out the reaction taurolithocholate + 3'-phosphoadenylyl sulfate = taurolithocholate 3-sulfate + adenosine 3',5'-bisphosphate + H(+). The enzyme catalyses lithocholate + 3'-phosphoadenylyl sulfate = lithocholate sulfate + adenosine 3',5'-bisphosphate + H(+). Subject to substrate inhibition. Alternate orientations for binding of steroid substrates to SULT2A1 may play a role in substrate inhibition. Its function is as follows. Sulfotransferase that utilizes 3'-phospho-5'-adenylyl sulfate (PAPS) as sulfonate donor to catalyze the sulfonation of steroids and bile acids in the liver and adrenal glands. Mediates the sulfation of a wide range of steroids and sterols, including pregnenolone, androsterone, DHEA, bile acids, cholesterol and as well many xenobiotics that contain alcohol and phenol functional groups. Sulfonation increases the water solubility of most compounds, and therefore their renal excretion, but it can also result in bioactivation to form active metabolites. Plays an important role in maintening steroid and lipid homeostasis. Plays a key role in bile acid metabolism. In addition, catalyzes the metabolic activation of potent carcinogenic polycyclic arylmethanols. In Homo sapiens (Human), this protein is Sulfotransferase 2A1 (SULT2A1).